Reading from the N-terminus, the 63-residue chain is Cecropin-A2 (63 aa).

A signal peptide spans 1–23 (MNFYNIFVFVALILAITIGQSEA). The residue at position 62 (Arg-62) is an Arginine amide.

Belongs to the cecropin family. In terms of tissue distribution, strongly expressed in larval, pupal and adult fat body and hemocytes after injection of bacteria. Maximal expression in the adult involves fat body cells of the head, thorax and abdomen.

It localises to the secreted. Cecropins have lytic and antibacterial activity against several Gram-positive and Gram-negative bacteria. In Drosophila melanogaster (Fruit fly), this protein is Cecropin-A2.